A 226-amino-acid chain; its full sequence is Teichuronic acid biosynthesis protein TuaF (226 aa).

2 consecutive transmembrane segments (helical) span residues Asn-15–Ser-35 and Val-202–Phe-222.

It is found in the cell membrane. It functions in the pathway cell wall biogenesis; teichuronic acid biosynthesis. The protein is Teichuronic acid biosynthesis protein TuaF (tuaF) of Bacillus subtilis (strain 168).